Consider the following 760-residue polypeptide: Protein P1 (760 aa).

The first 33 residues, 1-33 (MASFLKPVNSQGLWLSLLLAITYLFLLPSAGQS), serve as a signal peptide directing secretion. 4 helical membrane passes run 172-192 (LIEF…VYVA), 194-214 (AVPG…WAWP), 218-235 (ASSL…IGFL), and 240-260 (IGLI…WSLL). Positions 318–515 (IPGVQIKKLR…SSSPKFTGCE (198 aa)) constitute a Peptidase S39 domain. Active-site for protease activity residues include histidine 366, aspartate 396, and serine 465. 2 disordered regions span residues 572–672 (GLWA…LSQV) and 684–760 (LTVQ…PRRN). Basic and acidic residues predominate over residues 621–643 (RAEKVRHVRRSEMTPEQKRADNL).

The protein belongs to the peptidase S39B family. In terms of processing, specific enzymatic cleavages in vivo yield mature proteins. The protease probably cleaves itself and releases the VPg protein.

The protein localises to the membrane. Its function is as follows. Precursor from which the VPg molecule is probably released at the onset of the RNA synthesis. Essential for virus replication. The polypeptide is Protein P1 (Pea enation mosaic virus-1 (strain WSG) (PEMV-1)).